The chain runs to 862 residues: uncharacterized protein (862 aa).

A signal peptide spans 1–25 (MKPRPYSVFLFLHIVFYSLLSAVNG). Residues 26–61 (SPSLDYFETCSNFVPRAGIPTFSPYAVIKNFDEVNR) are Lumenal-facing. A helical membrane pass occupies residues 62-82 (MYYIQVVGNLSGVITIVGGNG). Residues 83–187 (SHIHAASVYS…STTLYYFYPV (105 aa)) lie on the Cytoplasmic side of the membrane. Residues 188–208 (ISYLVVVSLAYVSFSIIYALF) form a helical membrane-spanning segment. The Lumenal portion of the chain corresponds to 209 to 230 (LNPWTGSLDPFKSIFNFNMDPD). The helical transmembrane segment at 231 to 250 (ALRLTSLGFFDFVQYLQFAV) threads the bilayer. The Cytoplasmic segment spans residues 251 to 256 (STAQVS). Residues 257–277 (VMFPKFYINIMAALSWGTALF) form a helical membrane-spanning segment. The Lumenal portion of the chain corresponds to 278–329 (RFPIFSEPAEYQFADFADLSVASSSYADYLPKSYGMYSFLDSIGIGTACWLP). A helical membrane pass occupies residues 330–350 (FLIVMVIYLFAALFVALLVIF). The Cytoplasmic portion of the chain corresponds to 351–372 (LKWLMSRIFNETIAETRWDTWS). A helical membrane pass occupies residues 373 to 393 (FIAGSLIRLYFLTYFPTVAYM). The Lumenal segment spans residues 394 to 404 (SFQFVAPPTGY). A helical membrane pass occupies residues 405 to 425 (EIIPVLWFIFFGIFIPVYLYM). Topologically, residues 426 to 457 (NLAFVEPSSKLLEDQTYLHLFGSIYNSFREER) are cytoplasmic. The chain crosses the membrane as a helical span at residues 458 to 480 (VMFWIFPIAVQFMRGITVGVIGS). Residues 481 to 483 (SGS) lie on the Lumenal side of the membrane. The helical transmembrane segment at 484–503 (AQLAIFFILEVANVVAYAYV) threads the bilayer. Topologically, residues 504 to 514 (RPHFPQTSMNT) are cytoplasmic. A helical membrane pass occupies residues 515–535 (LNTFISTMRLITVILMIPLDP). Residues 536-545 (RLKVLGISRD) lie on the Lumenal side of the membrane. The helical transmembrane segment at 546-566 (LLAYAILFIHIMVCILFLLLS) threads the bilayer. Over 567–862 (TQRFMEVSAR…AESAWSIPHP (296 aa)) the chain is Cytoplasmic. Residues 668–686 (QASSLVPSKNNTASSSSLM) are compositionally biased toward polar residues. Disordered stretches follow at residues 668–717 (QASS…SVRK) and 815–862 (VLRS…IPHP). A compositionally biased stretch (low complexity) spans 689 to 700 (SPVTPSSPYSTS). The segment covering 834–850 (EPSRDEQYSMERKKTDD) has biased composition (basic and acidic residues).

The protein belongs to the transient receptor potential (TRP) ion channel family.

The protein resides in the cytoplasm. It localises to the golgi apparatus membrane. This is an uncharacterized protein from Schizosaccharomyces pombe (strain 972 / ATCC 24843) (Fission yeast).